The primary structure comprises 491 residues: Protein nucleotidyltransferase YdiU (491 aa).

Residues Gly-88, Gly-90, Arg-91, Lys-111, Asp-123, Gly-124, Arg-174, and Arg-181 each coordinate ATP. Residue Asp-250 is the Proton acceptor of the active site. 2 residues coordinate Mg(2+): Asn-251 and Asp-260. An ATP-binding site is contributed by Asp-260.

The protein belongs to the SELO family. Requires Mg(2+) as cofactor. Mn(2+) serves as cofactor.

It carries out the reaction L-seryl-[protein] + ATP = 3-O-(5'-adenylyl)-L-seryl-[protein] + diphosphate. The catalysed reaction is L-threonyl-[protein] + ATP = 3-O-(5'-adenylyl)-L-threonyl-[protein] + diphosphate. It catalyses the reaction L-tyrosyl-[protein] + ATP = O-(5'-adenylyl)-L-tyrosyl-[protein] + diphosphate. The enzyme catalyses L-histidyl-[protein] + UTP = N(tele)-(5'-uridylyl)-L-histidyl-[protein] + diphosphate. It carries out the reaction L-seryl-[protein] + UTP = O-(5'-uridylyl)-L-seryl-[protein] + diphosphate. The catalysed reaction is L-tyrosyl-[protein] + UTP = O-(5'-uridylyl)-L-tyrosyl-[protein] + diphosphate. Functionally, nucleotidyltransferase involved in the post-translational modification of proteins. It can catalyze the addition of adenosine monophosphate (AMP) or uridine monophosphate (UMP) to a protein, resulting in modifications known as AMPylation and UMPylation. In Bradyrhizobium sp. (strain BTAi1 / ATCC BAA-1182), this protein is Protein nucleotidyltransferase YdiU.